The chain runs to 1016 residues: Poly [ADP-ribose] polymerase 1 (1016 aa).

Residue A2 is modified to N-acetylalanine. The segment at 9–93 (YRVEYAKSGR…TIKKMAETGG (85 aa)) adopts a PARP-type 1 zinc-finger fold. 2 residues coordinate Zn(2+): C21 and C24. S41 carries the phosphoserine modification. The Zn(2+) site is built by H53 and C56. N6-acetyllysine is present on residues K100 and K108. A PARP-type 2 zinc finger spans residues 116-206 (FGAGYAKSNR…TLKKQLPAIK (91 aa)). C128 and C131 together coordinate Zn(2+). Position 134 is an N6-acetyllysine (K134). 2 residues coordinate Zn(2+): H162 and C165. 2 positions are modified to phosphoserine: S180 and S188. K206 is covalently cross-linked (Glycyl lysine isopeptide (Lys-Gly) (interchain with G-Cter in SUMO1); alternate). A Glycyl lysine isopeptide (Lys-Gly) (interchain with G-Cter in SUMO2); alternate cross-link involves residue K206. 2 short sequence motifs (nuclear localization signal) span residues 210 to 212 (KRK) and 224 to 229 (KKKSKK). One can recognise a PADR1 zinc-binding domain in the interval 228-362 (KKEKDKEIKL…IKKQDRIFPP (135 aa)). A Glycyl lysine isopeptide (Lys-Gly) (interchain with G-Cter in SUMO2) cross-link involves residue K252. Phosphoserine occurs at positions 277 and 280. A zinc ribbon region spans residues 293–335 (GALLPCEECSGQLVFKGDAYYCTGDVTAWTKCMVKTQTPNRKE). Zn(2+) is bound by residues C298, C301, C314, and C324. The disordered stretch occupies residues 360–390 (FPPESSTPVGAAAPPSAASAPAAVHSGPPDK). A compositionally biased stretch (low complexity) spans 365–386 (STPVGAAAPPSAASAPAAVHSG). An automodification domain region spans residues 376–526 (AASAPAAVHS…GTNKSEKRMK (151 aa)). In terms of domain architecture, BRCT spans 387–478 (PPDKPLSNMK…KSLQELLSTH (92 aa)). D389 carries the post-translational modification PolyADP-ribosyl aspartic acid. A polyADP-ribosyl glutamic acid mark is found at E409, E415, E437, E446, E447, E450, and E458. K469 is covalently cross-linked (Glycyl lysine isopeptide (Lys-Gly) (interchain with G-Cter in SUMO2)). A polyADP-ribosyl glutamic acid mark is found at E473 and E486. K488 is covalently cross-linked (Glycyl lysine isopeptide (Lys-Gly) (interchain with G-Cter in SUMO1); alternate). Residue K488 forms a Glycyl lysine isopeptide (Lys-Gly) (interchain with G-Cter in SUMO2); alternate linkage. PolyADP-ribosyl glutamic acid occurs at positions 490 and 493. The segment at 494–523 (AVGPKGKSGAAPSKKSKGPVKEEGTNKSEK) is disordered. A compositionally biased stretch (low complexity) spans 496–506 (GPKGKSGAAPS). S501, S506, and S509 each carry ADP-ribosylserine. The segment covering 512 to 523 (PVKEEGTNKSEK) has biased composition (basic and acidic residues). K514 is covalently cross-linked (Glycyl lysine isopeptide (Lys-Gly) (interchain with G-Cter in SUMO2)). E515 and E516 each carry polyADP-ribosyl glutamic acid. An ADP-ribosylserine modification is found at S521. E522 carries the post-translational modification PolyADP-ribosyl glutamic acid. N6-(ADP-ribosyl)lysine is present on K523. K530 is covalently cross-linked (Glycyl lysine isopeptide (Lys-Gly) (interchain with G-Cter in SUMO2)). The region spanning 544–640 (NAHVLEKGGK…KNFTKHPKKF (97 aa)) is the WGR domain. Phosphothreonine is present on T596. N6-acetyllysine is present on residues K602 and K623. The 118-residue stretch at 664 to 781 (KSKLPKPVQN…DIEVAYSLLR (118 aa)) folds into the PARP alpha-helical domain. A Glycyl lysine isopeptide (Lys-Gly) (interchain with G-Cter in SUMO1); alternate cross-link involves residue K750. K750 is covalently cross-linked (Glycyl lysine isopeptide (Lys-Gly) (interchain with G-Cter in SUMO2); alternate). Phosphoserine occurs at positions 784 and 788. The region spanning 790-1016 (DPIDVNYEKL…LKFNFKTSLW (227 aa)) is the PARP catalytic domain. Residues 864 to 866 (HGS), G873, R880, and S906 each bind NAD(+). E990 functions as the For poly [ADP-ribose] polymerase activity in the catalytic mechanism.

Belongs to the ARTD/PARP family. In terms of assembly, homodimer; PARP-type zinc-fingers from separate PARP1 molecules form a dimer module that specifically recognizes DNA strand breaks. Heterodimer; heterodimerizes with PARP2. Interacts (via the PARP catalytic domain) with HPF1. Interacts with NMNAT1. Interacts with nucleosomes; with a preference for nucleosomes containing H2A.X. Interacts with APTX. Component of a base excision repair (BER) complex, containing at least XRCC1, PARP1, PARP2, POLB and LRIG3. Interacts with SRY. The SWAP complex consists of NPM1, NCL, PARP1 and SWAP70. Interacts with TIAM2. Interacts with PARP3; leading to activate PARP1 in absence of DNA. Interacts (when poly-ADP-ribosylated) with CHD1L (via macro domain). Interacts with the DNA polymerase alpha catalytic subunit POLA1; this interaction functions as part of the control of replication fork progression. Interacts with EEF1A1 and TXK. Interacts with RNF4. Interacts with RNF146. Interacts with ZNF423. Interacts with APLF. Interacts with SNAI1 (via zinc fingers); the interaction requires SNAI1 to be poly-ADP-ribosylated and non-phosphorylated (active) by GSK3B. Interacts (when poly-ADP-ribosylated) with PARP9. Interacts with NR4A3; activates PARP1 by improving acetylation of PARP1 and suppressing the interaction between PARP1 and SIRT1. Interacts (via catalytic domain) with PUM3; the interaction inhibits the poly-ADP-ribosylation activity of PARP1 and the degradation of PARP1 by CASP3 following genotoxic stress. Interacts with ZNF365. Interacts with RRP1B. Interacts with TIMELESS; the interaction is direct. Interacts with CGAS; leading to impede the formation of the PARP1-TIMELESS complex. Interacts with KHDC3L, the interaction is increased following the formation of DNA double-strand breaks. Interacts (when auto-poly-ADP-ribosylated) with XRCC1; leading to inhibit PARP1 ADP-ribosyltransferase activity. Interacts with SPINDOC; promoting PARP1 ADP-ribosyltransferase activity. Interacts with BANF1; leading to inhibit PARP1 ADP-ribosyltransferase activity in response to oxidative DNA damage. Interacts (when sumoylated and ubiquitinated) with VCP/p97; leading to its extraction from chromatin. Interacts with YARS1; promoting PARP1 ADP-ribosyltransferase activity. Interacts with PACMP micropeptide; Interacts with PACMP micropeptide; interaction. Interacts (when poly-ADP-ribosylated) with isoform 1 of MACROH2A1; MACROH2A1 specifically binds to poly-ADP-ribose chains and inhibits PARP1 activity, limiting the consumption of nuclear NAD(+). Interacts with CARM1; promoting recruitment to replication forks. Interacts with RECQL. Interacts with ZNF32; the interaction reshapes ZNF432 interacting proteins. Interacts with TPRN; TPRN interacts with a number of DNA damage response proteins, is recruited to sites of DNA damage and may play a role in DNA damage repair. Interacts (when auto-poly-ADP-ribosylated) with AIFM1. Poly-ADP-ribosylated on serine, glutamate and aspartate residues by autocatalysis. Auto-ADP-ribosylation on serine takes place following interaction with HPF1. Auto poly-ADP-ribosylation on serine residues promotes its dissociation from chromatin. Poly-ADP-ribosylated by PARP2; poly-ADP-ribosylation mediates the recruitment of CHD1L to DNA damage sites. Mono-ADP-ribosylated at Lys-523 by SIRT6 in response to oxidative stress, promoting recruitment to double-strand breaks (DSBs) sites. In terms of processing, S-nitrosylated, leading to inhibit transcription regulation activity. Post-translationally, phosphorylated at Thr-596 by PRKDC in response to DNA damage following virus infection, promoting its translocation to the cytosol. Phosphorylated by TXK. Proteolytically cleaved by caspase-3 (CASP3) and caspase-7 (CASP7) in response to apoptosis to generate the Poly [ADP-ribose] polymerase 1, processed N-terminus and Poly [ADP-ribose] polymerase 1, processed C-terminus forms. In terms of processing, sumoylated with SUMO1 or SUMO2 by PIAS4 following prolonged residence (trapping) to chromatin. Sumoylation promotes ubiquitination by RNF4 and removal from chromatin by VCP/p97. Post-translationally, ubiquitinated by RNF4 following sumoylation by PIAS4 in response to prolonged residence (trapping) to chromatin. Ubiquitination promotes removal from chromatin by VCP/p97.

The protein resides in the chromosome. The protein localises to the nucleus. It is found in the nucleolus. Its subcellular location is the cytoplasm. It localises to the cytosol. It carries out the reaction NAD(+) + (ADP-D-ribosyl)n-acceptor = nicotinamide + (ADP-D-ribosyl)n+1-acceptor + H(+).. The enzyme catalyses L-seryl-[protein] + NAD(+) = O-(ADP-D-ribosyl)-L-seryl-[protein] + nicotinamide + H(+). It catalyses the reaction L-aspartyl-[protein] + NAD(+) = 4-O-(ADP-D-ribosyl)-L-aspartyl-[protein] + nicotinamide. The catalysed reaction is L-glutamyl-[protein] + NAD(+) = 5-O-(ADP-D-ribosyl)-L-glutamyl-[protein] + nicotinamide. It carries out the reaction L-tyrosyl-[protein] + NAD(+) = O-(ADP-D-ribosyl)-L-tyrosyl-[protein] + nicotinamide + H(+). The enzyme catalyses L-histidyl-[protein] + NAD(+) = N(tele)-(ADP-D-ribosyl)-L-histidyl-[protein] + nicotinamide + H(+). Its activity is regulated as follows. ADP-ribosyltransferase activity is regulated via an allosteric activation mechanism. In absence of activation signal, PARP1 is autoinhibited by the PARP alpha-helical domain (also named HD region), which prevents effective NAD(+)-binding. Activity is highly stimulated by signals, such as DNA strand breaks. Binding to damaged DNA unfolds the PARP alpha-helical domain, relieving autoinhibition. Poly-ADP-ribosyltransferase activity is tightly regulated and PARP1 is removed from damaged chromatin following initial poly-ADP-ribosylation of chromatin to avoid prolonged residence (trapping) that has cytotoxic consequences. A number of factors (VCP/p97) or post-translational modifications (auto-poly-ADP-ribosylation or ubiquitination) promote PARP1 removal from chromatin. Poly-ADP-ribosyltransferase that mediates poly-ADP-ribosylation of proteins and plays a key role in DNA repair. Mediates glutamate, aspartate, serine, histidine or tyrosine ADP-ribosylation of proteins: the ADP-D-ribosyl group of NAD(+) is transferred to the acceptor carboxyl group of target residues and further ADP-ribosyl groups are transferred to the 2'-position of the terminal adenosine moiety, building up a polymer with an average chain length of 20-30 units. Serine ADP-ribosylation of proteins constitutes the primary form of ADP-ribosylation of proteins in response to DNA damage. Specificity for the different amino acids is conferred by interacting factors, such as HPF1 and NMNAT1. Following interaction with HPF1, catalyzes serine ADP-ribosylation of target proteins; HPF1 confers serine specificity by completing the PARP1 active site. Also catalyzes tyrosine ADP-ribosylation of target proteins following interaction with HPF1. Following interaction with NMNAT1, catalyzes glutamate and aspartate ADP-ribosylation of target proteins; NMNAT1 confers glutamate and aspartate specificity. PARP1 initiates the repair of DNA breaks: recognizes and binds DNA breaks within chromatin and recruits HPF1, licensing serine ADP-ribosylation of target proteins, such as histones (H2BS6ADPr and H3S10ADPr), thereby promoting decompaction of chromatin and the recruitment of repair factors leading to the reparation of DNA strand breaks. HPF1 initiates serine ADP-ribosylation but restricts the polymerase activity of PARP1 in order to limit the length of poly-ADP-ribose chains. In addition to base excision repair (BER) pathway, also involved in double-strand breaks (DSBs) repair: together with TIMELESS, accumulates at DNA damage sites and promotes homologous recombination repair by mediating poly-ADP-ribosylation. Mediates the poly-ADP-ribosylation of a number of proteins, including itself, APLF, CHFR and NFAT5. In addition to proteins, also able to ADP-ribosylate DNA: catalyzes ADP-ribosylation of DNA strand break termini containing terminal phosphates and a 2'-OH group in single- and double-stranded DNA, respectively. Required for PARP9 and DTX3L recruitment to DNA damage sites. PARP1-dependent PARP9-DTX3L-mediated ubiquitination promotes the rapid and specific recruitment of 53BP1/TP53BP1, UIMC1/RAP80, and BRCA1 to DNA damage sites. PARP1-mediated DNA repair in neurons plays a role in sleep: senses DNA damage in neurons and promotes sleep, facilitating efficient DNA repair. In addition to DNA repair, also involved in other processes, such as transcription regulation, programmed cell death, membrane repair, adipogenesis and innate immunity. Acts as a repressor of transcription: binds to nucleosomes and modulates chromatin structure in a manner similar to histone H1, thereby altering RNA polymerase II. Acts both as a positive and negative regulator of transcription elongation, depending on the context. Acts as a positive regulator of transcription elongation by mediating poly-ADP-ribosylation of NELFE, preventing RNA-binding activity of NELFE and relieving transcription pausing. Acts as a negative regulator of transcription elongation in response to DNA damage by catalyzing poly-ADP-ribosylation of CCNT1, disrupting the phase separation activity of CCNT1 and subsequent activation of CDK9. Involved in replication fork progression following interaction with CARM1: mediates poly-ADP-ribosylation at replication forks, slowing fork progression. Poly-ADP-ribose chains generated by PARP1 also play a role in poly-ADP-ribose-dependent cell death, a process named parthanatos. Also acts as a negative regulator of the cGAS-STING pathway. Acts by mediating poly-ADP-ribosylation of CGAS: PARP1 translocates into the cytosol following phosphorylation by PRKDC and catalyzes poly-ADP-ribosylation and inactivation of CGAS. Acts as a negative regulator of adipogenesis: catalyzes poly-ADP-ribosylation of histone H2B on 'Glu-35' (H2BE35ADPr) following interaction with NMNAT1, inhibiting phosphorylation of H2B at 'Ser-36' (H2BS36ph), thereby blocking expression of pro-adipogenetic genes. Involved in the synthesis of ATP in the nucleus, together with NMNAT1, PARG and NUDT5. Nuclear ATP generation is required for extensive chromatin remodeling events that are energy-consuming. In terms of biological role, promotes AIFM1-mediated apoptosis. This form, which translocates into the cytoplasm following cleavage by caspase-3 (CASP3) and caspase-7 (CASP7) in response to apoptosis, is auto-poly-ADP-ribosylated and serves as a poly-ADP-ribose carrier to induce AIFM1-mediated apoptosis. Functionally, this cleavage form irreversibly binds to DNA breaks and interferes with DNA repair, promoting DNA damage-induced apoptosis. The chain is Poly [ADP-ribose] polymerase 1 (PARP1) from Bos taurus (Bovine).